A 268-amino-acid polypeptide reads, in one-letter code: Small ribosomal subunit protein eS1 (268 aa).

Belongs to the eukaryotic ribosomal protein eS1 family. In terms of assembly, component of the small ribosomal subunit. Mature ribosomes consist of a small (40S) and a large (60S) subunit. The 40S subunit contains about 33 different proteins and 1 molecule of RNA (18S). The 60S subunit contains about 49 different proteins and 3 molecules of RNA (28S, 5.8S and 5S).

It is found in the cytoplasm. This Artemia franciscana (Brine shrimp) protein is Small ribosomal subunit protein eS1.